The sequence spans 452 residues: Bifunctional protein GlmU (452 aa).

A pyrophosphorylase region spans residues 1–231 (MSRTCLAVIL…EAELAGCNNR (231 aa)). Residues 10 to 13 (LAAG), Lys24, Gln77, 82 to 83 (GT), 105 to 107 (YGD), Gly143, Glu157, Asn172, and Asn229 contribute to the UDP-N-acetyl-alpha-D-glucosamine site. Mg(2+) is bound at residue Asp107. A Mg(2+)-binding site is contributed by Asn229. Residues 232 to 252 (AELAVIEKLWQERRRHELMLS) form a linker region. The N-acetyltransferase stretch occupies residues 253 to 452 (GVSMIAPETV…MAIKAFSGKV (200 aa)). Positions 318 and 336 each coordinate UDP-N-acetyl-alpha-D-glucosamine. Catalysis depends on His348, which acts as the Proton acceptor. UDP-N-acetyl-alpha-D-glucosamine is bound by residues Tyr351 and Asn362. Acetyl-CoA-binding positions include Ala365, 371-372 (NY), Ser390, Ser408, and Arg425.

In the N-terminal section; belongs to the N-acetylglucosamine-1-phosphate uridyltransferase family. This sequence in the C-terminal section; belongs to the transferase hexapeptide repeat family. In terms of assembly, homotrimer. Requires Mg(2+) as cofactor.

It localises to the cytoplasm. It carries out the reaction alpha-D-glucosamine 1-phosphate + acetyl-CoA = N-acetyl-alpha-D-glucosamine 1-phosphate + CoA + H(+). The enzyme catalyses N-acetyl-alpha-D-glucosamine 1-phosphate + UTP + H(+) = UDP-N-acetyl-alpha-D-glucosamine + diphosphate. Its pathway is nucleotide-sugar biosynthesis; UDP-N-acetyl-alpha-D-glucosamine biosynthesis; N-acetyl-alpha-D-glucosamine 1-phosphate from alpha-D-glucosamine 6-phosphate (route II): step 2/2. The protein operates within nucleotide-sugar biosynthesis; UDP-N-acetyl-alpha-D-glucosamine biosynthesis; UDP-N-acetyl-alpha-D-glucosamine from N-acetyl-alpha-D-glucosamine 1-phosphate: step 1/1. It functions in the pathway bacterial outer membrane biogenesis; LPS lipid A biosynthesis. Functionally, catalyzes the last two sequential reactions in the de novo biosynthetic pathway for UDP-N-acetylglucosamine (UDP-GlcNAc). The C-terminal domain catalyzes the transfer of acetyl group from acetyl coenzyme A to glucosamine-1-phosphate (GlcN-1-P) to produce N-acetylglucosamine-1-phosphate (GlcNAc-1-P), which is converted into UDP-GlcNAc by the transfer of uridine 5-monophosphate (from uridine 5-triphosphate), a reaction catalyzed by the N-terminal domain. This chain is Bifunctional protein GlmU, found in Allorhizobium ampelinum (strain ATCC BAA-846 / DSM 112012 / S4) (Agrobacterium vitis (strain S4)).